Consider the following 73-residue polypeptide: Conotoxin CnIIIF (73 aa).

The signal sequence occupies residues 1–19 (MSKLGVLLTICLLLFPLTA). The propeptide occupies 20 to 51 (LPMDGDQSVDRPAERMQDDISSGQHPLFNQKR). 3 disulfide bridges follow: Cys53–Cys72, Cys54–Cys70, and Cys60–Cys73.

It belongs to the conotoxin M superfamily. As to expression, expressed by the venom duct.

Its subcellular location is the secreted. Shows a paralytic effect in fish. In Conus consors (Singed cone), this protein is Conotoxin CnIIIF.